The primary structure comprises 839 residues: Molybdenum cofactor sulfurase (839 aa).

N6-(pyridoxal phosphate)lysine is present on Lys237. Residue Cys401 is part of the active site. Residues 651 to 662 are compositionally biased toward polar residues; that stretch reads DQNYSQKQSPSM. The tract at residues 651–678 is disordered; that stretch reads DQNYSQKQSPSMPGSFPQAPSSPDPYPT. The MOSC domain occupies 656 to 834; it reads QKQSPSMPGS…IMVGDAVTPS (179 aa).

It belongs to the class-V pyridoxal-phosphate-dependent aminotransferase family. MOCOS subfamily. It depends on pyridoxal 5'-phosphate as a cofactor.

The catalysed reaction is Mo-molybdopterin + L-cysteine + AH2 = thio-Mo-molybdopterin + L-alanine + A + H2O. It participates in cofactor biosynthesis; molybdopterin biosynthesis. Its function is as follows. Sulfurates the molybdenum cofactor. Sulfation of molybdenum is essential for xanthine dehydrogenase (XDH) and aldehyde oxidase (ADO) enzymes in which molybdenum cofactor is liganded by 1 oxygen and 1 sulfur atom in active form. The chain is Molybdenum cofactor sulfurase from Emericella nidulans (strain FGSC A4 / ATCC 38163 / CBS 112.46 / NRRL 194 / M139) (Aspergillus nidulans).